A 487-amino-acid polypeptide reads, in one-letter code: N-succinylglutamate 5-semialdehyde dehydrogenase (487 aa).

Position 221-226 (221-226 (GSSDTG)) interacts with NAD(+). Residues glutamate 244 and cysteine 278 contribute to the active site.

The protein belongs to the aldehyde dehydrogenase family. AstD subfamily.

It carries out the reaction N-succinyl-L-glutamate 5-semialdehyde + NAD(+) + H2O = N-succinyl-L-glutamate + NADH + 2 H(+). It participates in amino-acid degradation; L-arginine degradation via AST pathway; L-glutamate and succinate from L-arginine: step 4/5. In terms of biological role, catalyzes the NAD-dependent reduction of succinylglutamate semialdehyde into succinylglutamate. The polypeptide is N-succinylglutamate 5-semialdehyde dehydrogenase (Burkholderia lata (strain ATCC 17760 / DSM 23089 / LMG 22485 / NCIMB 9086 / R18194 / 383)).